The sequence spans 307 residues: Glycerol-3-phosphate dehydrogenase [NAD(P)+] (307 aa).

Positions 14, 34, 35, and 82 each coordinate NADPH. Positions 82 and 110 each coordinate sn-glycerol 3-phosphate. An NADPH-binding site is contributed by Ser114. Residues Lys165, Asp218, Ser228, Arg229, and Asn230 each contribute to the sn-glycerol 3-phosphate site. Lys165 serves as the catalytic Proton acceptor. Residue Arg229 coordinates NADPH. Glu255 serves as a coordination point for NADPH.

Belongs to the NAD-dependent glycerol-3-phosphate dehydrogenase family.

The protein localises to the cytoplasm. It carries out the reaction sn-glycerol 3-phosphate + NAD(+) = dihydroxyacetone phosphate + NADH + H(+). It catalyses the reaction sn-glycerol 3-phosphate + NADP(+) = dihydroxyacetone phosphate + NADPH + H(+). It functions in the pathway membrane lipid metabolism; glycerophospholipid metabolism. Its function is as follows. Catalyzes the reduction of the glycolytic intermediate dihydroxyacetone phosphate (DHAP) to sn-glycerol 3-phosphate (G3P), the key precursor for phospholipid synthesis. This Nostoc sp. (strain PCC 7120 / SAG 25.82 / UTEX 2576) protein is Glycerol-3-phosphate dehydrogenase [NAD(P)+].